A 574-amino-acid chain; its full sequence is DNA polymerase I (574 aa).

The 158-residue stretch at 4–161 (EYVTGEEGLK…ELFPKMRDML (158 aa)) folds into the 3'-5' exonuclease domain.

The protein belongs to the DNA polymerase type-A family.

It carries out the reaction DNA(n) + a 2'-deoxyribonucleoside 5'-triphosphate = DNA(n+1) + diphosphate. This chain is DNA polymerase I (polA), found in Aquifex aeolicus (strain VF5).